The chain runs to 585 residues: MLTDMDISSRASLKNITEIGVDLGLLPEEMMLFGHTKAKVELSVLQRLAGQRKGKLIIVTAVTPTPHGEGKTVTSIGLTQSLNAIGQKACACIRQPSMGPVFGVKGGAAGGGYAQVVPMQEMNLHLTGDIHAVSSAHNLGAAAIAARLFHEARLGKTEFEAQSGQAFLDIAPNEIRWHRVVDHNDRCLRQIHVGLGDNNGPEYGSSFDITAASELMAILALSHDLADMRVRIGRLVLALNTQGQVITAEDLGVAGAMTAIMADAIKPTLMQTLNGSPCLIHSGPFANIAHGNSSIIADDIALRLADFVVTEGGFGSDMGFEKFCNIKVRQSGQAPAAAVLVTTLKALKANSGLATEVDSNVSNIHVPKINAANINAPDQARLEAGFANLNWHINNVARYGIPVVVAINRFATDSDAELQWLMEAVNASAAFGCEISDAFSQGEAGAIALAQTVVRAAEIESQFKLLYPDEASLEAKLSTLAEVGYGAAGVSLSIEAKQQAQQLTALGYGHLPLCMAKTPLSISHDPSLKGVPKDFVVPVRELVLHAGAGFITALVGNVMTMPGLGLKPGYLKIDIDAKGEIVGLG.

65–72 contacts ATP; sequence TPHGEGKT.

This sequence belongs to the formate--tetrahydrofolate ligase family.

It catalyses the reaction (6S)-5,6,7,8-tetrahydrofolate + formate + ATP = (6R)-10-formyltetrahydrofolate + ADP + phosphate. Its pathway is one-carbon metabolism; tetrahydrofolate interconversion. This is Formate--tetrahydrofolate ligase from Shewanella baltica (strain OS195).